The primary structure comprises 177 residues: uncharacterized protein (177 aa).

This sequence belongs to the flavoredoxin family. The cofactor is FMN.

This is an uncharacterized protein from Archaeoglobus fulgidus (strain ATCC 49558 / DSM 4304 / JCM 9628 / NBRC 100126 / VC-16).